A 157-amino-acid polypeptide reads, in one-letter code: Small ribosomal subunit protein uS7 (157 aa).

The protein belongs to the universal ribosomal protein uS7 family. As to quaternary structure, part of the 30S ribosomal subunit. Contacts proteins S9 and S11.

Functionally, one of the primary rRNA binding proteins, it binds directly to 16S rRNA where it nucleates assembly of the head domain of the 30S subunit. Is located at the subunit interface close to the decoding center, probably blocks exit of the E-site tRNA. This is Small ribosomal subunit protein uS7 from Koribacter versatilis (strain Ellin345).